The sequence spans 261 residues: Ribosomal RNA small subunit methyltransferase J (261 aa).

S-adenosyl-L-methionine is bound by residues 109–110 (RD), 125–126 (ER), and Asp-179.

This sequence belongs to the methyltransferase superfamily. RsmJ family.

The protein localises to the cytoplasm. The enzyme catalyses guanosine(1516) in 16S rRNA + S-adenosyl-L-methionine = N(2)-methylguanosine(1516) in 16S rRNA + S-adenosyl-L-homocysteine + H(+). Specifically methylates the guanosine in position 1516 of 16S rRNA. The protein is Ribosomal RNA small subunit methyltransferase J of Pseudomonas paraeruginosa (strain DSM 24068 / PA7) (Pseudomonas aeruginosa (strain PA7)).